Reading from the N-terminus, the 421-residue chain is Calreticulin (421 aa).

Residues 1-22 (MAFRVPNSSLLSLILLSLLAIA) form the signal peptide. N-linked (GlcNAc...) asparagine glycosylation is present at N56. C110 and C142 are oxidised to a cystine. An alpha-D-glucoside contacts are provided by Y114, K116, Y133, and D140. N156 carries an N-linked (GlcNAc...) asparagine glycan. 7 repeat units span residues 196 to 207 (KQTGSLYSDWDL), 215 to 226 (DPEAKKPEDWED), 232 to 243 (DPEDKKPEGYDD), 250 to 261 (DPDAKKPEDWDD), 265 to 275 (GEWTAPTIPNP), 279 to 289 (GEWKPKKIKNP), and 293 to 303 (GKWKAPLIDNP). Residues 196 to 261 (KQTGSLYSDW…DAKKPEDWDD (66 aa)) are 4 X approximate repeats. Residues 217–283 (EAKKPEDWED…NPEYKGEWKP (67 aa)) are disordered. Positions 223–232 (DWEDQEYIPD) are enriched in acidic residues. Residues 233–257 (PEDKKPEGYDDIPKEITDPDAKKPE) are compositionally biased toward basic and acidic residues. The segment at 265–303 (GEWTAPTIPNPEYKGEWKPKKIKNPNFKGKWKAPLIDNP) is 3 X approximate repeats. E323 is a binding site for an alpha-D-glucoside. Basic and acidic residues predominate over residues 350 to 380 (EETWGKQKDAEKAAFEELEKKLQEEESKEDP). Residues 350–421 (EETWGKQKDA…ETEAEKHDEL (72 aa)) form a disordered region. Residues 381–399 (VDSDAEDDDNEAEDGEESD) show a composition bias toward acidic residues. The Prevents secretion from ER motif lies at 418 to 421 (HDEL).

Belongs to the calreticulin family.

It localises to the endoplasmic reticulum lumen. Functionally, molecular calcium-binding chaperone promoting folding, oligomeric assembly and quality control in the ER via the calreticulin/calnexin cycle. This lectin may interact transiently with almost all of the monoglucosylated glycoproteins that are synthesized in the ER. The sequence is that of Calreticulin from Prunus armeniaca (Apricot).